The sequence spans 328 residues: tRNA uridine(34) hydroxylase (328 aa).

The Rhodanese domain occupies Gln-122–Trp-218. Catalysis depends on Cys-178, which acts as the Cysteine persulfide intermediate.

Belongs to the TrhO family.

It carries out the reaction uridine(34) in tRNA + AH2 + O2 = 5-hydroxyuridine(34) in tRNA + A + H2O. In terms of biological role, catalyzes oxygen-dependent 5-hydroxyuridine (ho5U) modification at position 34 in tRNAs. This Chlamydia muridarum (strain MoPn / Nigg) protein is tRNA uridine(34) hydroxylase.